A 407-amino-acid polypeptide reads, in one-letter code: Peptidase T (407 aa).

His82 provides a ligand contact to Zn(2+). Asp84 is a catalytic residue. Residue Asp143 participates in Zn(2+) binding. Glu177 (proton acceptor) is an active-site residue. Residues Glu178, Asp200, and His382 each coordinate Zn(2+).

It belongs to the peptidase M20B family. Zn(2+) serves as cofactor.

It localises to the cytoplasm. The enzyme catalyses Release of the N-terminal residue from a tripeptide.. In terms of biological role, cleaves the N-terminal amino acid of tripeptides. This chain is Peptidase T, found in Streptococcus equi subsp. equi (strain 4047).